The primary structure comprises 251 residues: MFSGSSNAVPEGREPPRHIAIIMDGNGRWAKKRFLPRVAGHKRGLDAVREVVKACKEMGVGYLTLFAFSTENWRRPQEEVSFLMDLFLRALEHEVAKLHNNNIRLKVLGSRERFSAELSERIDRAEAKTAGNDGLVLTIAADYGGRWDIVHAVNRLIAEGRSEITEEMVTDRLGMAWAPEPDLFIRTGGEQRISNFLLWQLAYSELYFTDLLWPDFDRAALQEAIHSYWQRERRFGRTSEQLPEHLRRDKL.

The active site involves D24. D24 contacts Mg(2+). Substrate contacts are provided by residues 25–28 (GNGR), W29, R37, H41, and 69–71 (STE). N72 acts as the Proton acceptor in catalysis. Substrate is bound by residues W73, R75, R186, and 192–194 (RIS). E205 is a Mg(2+) binding site.

This sequence belongs to the UPP synthase family. As to quaternary structure, homodimer. It depends on Mg(2+) as a cofactor.

Functionally, catalyzes the condensation of isopentenyl diphosphate (IPP) with allylic pyrophosphates generating different type of terpenoids. This is Isoprenyl transferase from Chromobacterium violaceum (strain ATCC 12472 / DSM 30191 / JCM 1249 / CCUG 213 / NBRC 12614 / NCIMB 9131 / NCTC 9757 / MK).